Reading from the N-terminus, the 845-residue chain is Beta-glucosidase B (845 aa).

N-linked (GlcNAc...) asparagine glycosylation occurs at asparagine 202. Aspartate 230 is a catalytic residue. Asparagine 235 is a glycosylation site (N-linked (GlcNAc...) asparagine). Residues 406 to 557 (EGQPGWTLDF…HNRDLLSEAV (152 aa)) form the PA14 domain. 3 N-linked (GlcNAc...) asparagine glycosylation sites follow: asparagine 591, asparagine 612, and asparagine 794.

This sequence belongs to the glycosyl hydrolase 3 family.

It catalyses the reaction Hydrolysis of terminal, non-reducing beta-D-glucosyl residues with release of beta-D-glucose.. The protein operates within glycan metabolism; cellulose degradation. Beta-glucosidases are one of a number of cellulolytic enzymes involved in the degradation of cellulosic biomass. Catalyzes the last step releasing glucose from the inhibitory cellobiose. In Emericella nidulans (strain FGSC A4 / ATCC 38163 / CBS 112.46 / NRRL 194 / M139) (Aspergillus nidulans), this protein is Beta-glucosidase B (bglB).